A 341-amino-acid polypeptide reads, in one-letter code: N-acetyl-gamma-glutamyl-phosphate reductase (341 aa).

Cys147 is a catalytic residue.

This sequence belongs to the NAGSA dehydrogenase family. Type 1 subfamily.

The protein resides in the cytoplasm. It catalyses the reaction N-acetyl-L-glutamate 5-semialdehyde + phosphate + NADP(+) = N-acetyl-L-glutamyl 5-phosphate + NADPH + H(+). Its pathway is amino-acid biosynthesis; L-arginine biosynthesis; N(2)-acetyl-L-ornithine from L-glutamate: step 3/4. In terms of biological role, catalyzes the NADPH-dependent reduction of N-acetyl-5-glutamyl phosphate to yield N-acetyl-L-glutamate 5-semialdehyde. The chain is N-acetyl-gamma-glutamyl-phosphate reductase from Dehalococcoides mccartyi (strain ATCC BAA-2100 / JCM 16839 / KCTC 5957 / BAV1).